The following is a 266-amino-acid chain: Undecaprenyl-diphosphatase (266 aa).

The next 8 membrane-spanning stretches (helical) occupy residues 1-21 (MDIFQVIVLALIQGLTEFLPI), 39-59 (QGLTFDVAVNTGSLLAVVIYF), 87-107 (WWIILATIPAVIFGFTAKDFI), 114-134 (IEVIATTTIVFGLLLWWADKL), 144-164 (VGWKKALLIGFAQAMALIPGT), 184-204 (AARFSFLMSVPVSLGAAILVV), 218-238 (ALVLGTALSFVAAYLCIHYFL), and 246-266 (MTPFVIYRLALGAILCVVIFA).

This sequence belongs to the UppP family.

It localises to the cell inner membrane. The catalysed reaction is di-trans,octa-cis-undecaprenyl diphosphate + H2O = di-trans,octa-cis-undecaprenyl phosphate + phosphate + H(+). Its function is as follows. Catalyzes the dephosphorylation of undecaprenyl diphosphate (UPP). Confers resistance to bacitracin. The chain is Undecaprenyl-diphosphatase from Shewanella loihica (strain ATCC BAA-1088 / PV-4).